We begin with the raw amino-acid sequence, 1014 residues long: Beta-galactosidase (1014 aa).

Catalysis depends on Glu460, which acts as the Proton donor. Catalysis depends on Glu527, which acts as the Nucleophile.

Belongs to the glycosyl hydrolase 2 family.

The catalysed reaction is Hydrolysis of terminal non-reducing beta-D-galactose residues in beta-D-galactosides.. In Halalkalibacterium halodurans (strain ATCC BAA-125 / DSM 18197 / FERM 7344 / JCM 9153 / C-125) (Bacillus halodurans), this protein is Beta-galactosidase (lacZ).